Here is a 133-residue protein sequence, read N- to C-terminus: Ribosome-binding factor A (133 aa).

Belongs to the RbfA family. As to quaternary structure, monomer. Binds 30S ribosomal subunits, but not 50S ribosomal subunits or 70S ribosomes.

The protein localises to the cytoplasm. Its function is as follows. One of several proteins that assist in the late maturation steps of the functional core of the 30S ribosomal subunit. Associates with free 30S ribosomal subunits (but not with 30S subunits that are part of 70S ribosomes or polysomes). Required for efficient processing of 16S rRNA. May interact with the 5'-terminal helix region of 16S rRNA. The chain is Ribosome-binding factor A from Pseudomonas fluorescens (strain ATCC BAA-477 / NRRL B-23932 / Pf-5).